A 248-amino-acid polypeptide reads, in one-letter code: Probable transcriptional regulatory protein PLES_43501 (248 aa).

The protein belongs to the TACO1 family.

Its subcellular location is the cytoplasm. This is Probable transcriptional regulatory protein PLES_43501 from Pseudomonas aeruginosa (strain LESB58).